A 332-amino-acid polypeptide reads, in one-letter code: Adenosine deaminase (332 aa).

H12 and H14 together coordinate Zn(2+). 3 residues coordinate substrate: H14, D16, and G170. H197 is a binding site for Zn(2+). Catalysis depends on E200, which acts as the Proton donor. D278 is a Zn(2+) binding site.

This sequence belongs to the metallo-dependent hydrolases superfamily. Adenosine and AMP deaminases family. Adenosine deaminase subfamily. Zn(2+) is required as a cofactor.

It catalyses the reaction adenosine + H2O + H(+) = inosine + NH4(+). It carries out the reaction 2'-deoxyadenosine + H2O + H(+) = 2'-deoxyinosine + NH4(+). Catalyzes the hydrolytic deamination of adenosine and 2-deoxyadenosine. This chain is Adenosine deaminase, found in Clostridium perfringens (strain SM101 / Type A).